Reading from the N-terminus, the 429-residue chain is Enolase (429 aa).

Residue Gln-163 participates in (2R)-2-phosphoglycerate binding. Residue Glu-205 is the Proton donor of the active site. Positions 242, 285, and 312 each coordinate Mg(2+). (2R)-2-phosphoglycerate-binding residues include Lys-337, Arg-366, Ser-367, and Lys-388. Residue Lys-337 is the Proton acceptor of the active site.

It belongs to the enolase family. It depends on Mg(2+) as a cofactor.

The protein resides in the cytoplasm. It is found in the secreted. It localises to the cell surface. The enzyme catalyses (2R)-2-phosphoglycerate = phosphoenolpyruvate + H2O. It functions in the pathway carbohydrate degradation; glycolysis; pyruvate from D-glyceraldehyde 3-phosphate: step 4/5. Functionally, catalyzes the reversible conversion of 2-phosphoglycerate (2-PG) into phosphoenolpyruvate (PEP). It is essential for the degradation of carbohydrates via glycolysis. This chain is Enolase, found in Methylorubrum extorquens (strain PA1) (Methylobacterium extorquens).